Consider the following 335-residue polypeptide: Beta-hexosaminidase (335 aa).

Substrate-binding positions include Asp60, Arg68, Arg133, and 163 to 164; that span reads KH. The active-site Proton donor/acceptor is His176. Asp247 acts as the Nucleophile in catalysis.

It belongs to the glycosyl hydrolase 3 family. NagZ subfamily. In terms of assembly, monomer.

The protein resides in the cytoplasm. The enzyme catalyses Hydrolysis of terminal non-reducing N-acetyl-D-hexosamine residues in N-acetyl-beta-D-hexosaminides.. It functions in the pathway cell wall biogenesis; peptidoglycan recycling. Its function is as follows. Plays a role in peptidoglycan recycling by cleaving the terminal beta-1,4-linked N-acetylglucosamine (GlcNAc) from peptide-linked peptidoglycan fragments, giving rise to free GlcNAc, anhydro-N-acetylmuramic acid and anhydro-N-acetylmuramic acid-linked peptides. This Xylella fastidiosa (strain 9a5c) protein is Beta-hexosaminidase.